A 248-amino-acid polypeptide reads, in one-letter code: ATP synthase subunit a, chloroplastic (248 aa).

The next 5 helical transmembrane spans lie at 37 to 57 (AQVLITSWIVIAILLSLAVLA), 96 to 116 (VPFIGTMFLFIFVSNWSGALF), 135 to 155 (INTTVALALLTSVAYFYAGLH), 200 to 220 (LVVAVLISLVPLVVPIPMMFL), and 221 to 241 (GLFTSAIQALIFATLAAAYIG).

This sequence belongs to the ATPase A chain family. F-type ATPases have 2 components, CF(1) - the catalytic core - and CF(0) - the membrane proton channel. CF(1) has five subunits: alpha(3), beta(3), gamma(1), delta(1), epsilon(1). CF(0) has four main subunits: a, b, b' and c.

It localises to the plastid. The protein localises to the chloroplast thylakoid membrane. Key component of the proton channel; it plays a direct role in the translocation of protons across the membrane. This is ATP synthase subunit a, chloroplastic from Marchantia polymorpha (Common liverwort).